The following is a 343-amino-acid chain: Ribosomal RNA small subunit methyltransferase C (343 aa).

The protein belongs to the methyltransferase superfamily. RsmC family. Monomer.

The protein resides in the cytoplasm. The enzyme catalyses guanosine(1207) in 16S rRNA + S-adenosyl-L-methionine = N(2)-methylguanosine(1207) in 16S rRNA + S-adenosyl-L-homocysteine + H(+). Its function is as follows. Specifically methylates the guanine in position 1207 of 16S rRNA in the 30S particle. This is Ribosomal RNA small subunit methyltransferase C from Escherichia coli O6:K15:H31 (strain 536 / UPEC).